Here is a 468-residue protein sequence, read N- to C-terminus: Transmembrane protein 151B (468 aa).

A disordered region spans residues 1 to 25 (MPEDGGGDSGDVPEIIPDGEPLREE). The next 2 membrane-spanning stretches (helical) occupy residues 45–65 (CLLL…CRLA) and 98–118 (YLYI…AECW). The interval 384–438 (VSSNSLPPARPSGPRLPFSRSRLSLGAGGRATPGVFRSLSGGPLGRRGEDTEPLE) is disordered.

This sequence belongs to the TMEM151 family.

The protein resides in the membrane. The polypeptide is Transmembrane protein 151B (TMEM151B) (Bos taurus (Bovine)).